A 538-amino-acid chain; its full sequence is Putative outer membrane porin BglH (538 aa).

Positions 1–25 are cleaved as a signal peptide; the sequence is MFRRNIITSAILLMAPLAFSAQSLA.

The protein belongs to the porin LamB (TC 1.B.3) family.

The protein localises to the cell outer membrane. In terms of biological role, may be a sugar porin with a broad carbohydrate specificity. The polypeptide is Putative outer membrane porin BglH (bglH) (Escherichia coli O6:H1 (strain CFT073 / ATCC 700928 / UPEC)).